The sequence spans 249 residues: Proteasome subunit alpha (249 aa).

The tract at residues 229-249 is disordered; sequence EAREAEEAAEAQSSEDGGATD.

It belongs to the peptidase T1A family. In terms of assembly, the 20S proteasome core is composed of 14 alpha and 14 beta subunits that assemble into four stacked heptameric rings, resulting in a barrel-shaped structure. The two inner rings, each composed of seven catalytic beta subunits, are sandwiched by two outer rings, each composed of seven alpha subunits. The catalytic chamber with the active sites is on the inside of the barrel. Has a gated structure, the ends of the cylinder being occluded by the N-termini of the alpha-subunits. Is capped by the proteasome-associated ATPase, ARC.

Its subcellular location is the cytoplasm. It functions in the pathway protein degradation; proteasomal Pup-dependent pathway. With respect to regulation, the formation of the proteasomal ATPase ARC-20S proteasome complex, likely via the docking of the C-termini of ARC into the intersubunit pockets in the alpha-rings, may trigger opening of the gate for substrate entry. Interconversion between the open-gate and close-gate conformations leads to a dynamic regulation of the 20S proteasome proteolysis activity. In terms of biological role, component of the proteasome core, a large protease complex with broad specificity involved in protein degradation. The protein is Proteasome subunit alpha of Thermobifida fusca (strain YX).